The following is a 164-amino-acid chain: uncharacterized protein (164 aa).

Residues 46–66 (FIRPNIYLIIFIIIVLLLLYY) traverse the membrane as a helical segment. A coiled-coil region spans residues 72–137 (KADKEKEKLE…YNLNKENLRE (66 aa)). Positions 76–91 (EKEKLEDTDKEFDKST) are enriched in basic and acidic residues. The disordered stretch occupies residues 76–114 (EKEKLEDTDKEFDKSTNNDTNSKKIYHRQKNSKTLNSSK).

The protein resides in the membrane. This is an uncharacterized protein from Acanthamoeba polyphaga mimivirus (APMV).